Consider the following 252-residue polypeptide: dITP/XTP pyrophosphatase (252 aa).

7–12 serves as a coordination point for substrate; the sequence is THNEGK. Asp-74 serves as the catalytic Proton acceptor. Asp-74 serves as a coordination point for Mg(2+). Residues Ser-75 and 193 to 196 each bind substrate; that span reads FGYD. The interval 202–229 is disordered; it reads DDQPAGRVSTEPDHEGEPLTSAEMTPAE. Substrate-binding positions include Lys-230 and 235–236; that span reads HR.

It belongs to the HAM1 NTPase family. In terms of assembly, homodimer. Requires Mg(2+) as cofactor.

The enzyme catalyses XTP + H2O = XMP + diphosphate + H(+). It catalyses the reaction dITP + H2O = dIMP + diphosphate + H(+). It carries out the reaction ITP + H2O = IMP + diphosphate + H(+). Pyrophosphatase that catalyzes the hydrolysis of nucleoside triphosphates to their monophosphate derivatives, with a high preference for the non-canonical purine nucleotides XTP (xanthosine triphosphate), dITP (deoxyinosine triphosphate) and ITP. Seems to function as a house-cleaning enzyme that removes non-canonical purine nucleotides from the nucleotide pool, thus preventing their incorporation into DNA/RNA and avoiding chromosomal lesions. This is dITP/XTP pyrophosphatase from Bifidobacterium longum (strain DJO10A).